The primary structure comprises 130 residues: Histone H2A.1 (130 aa).

Residues 1-22 form a disordered region; that stretch reads MSGGKGKAGSSEKASTSRSAKA. At Ser-2 the chain carries N-acetylserine. N6-acetyllysine is present on residues Lys-5 and Lys-7. N5-methylglutamine is present on Gln-105. Ser-127 is subject to Phosphoserine. Positions 127 to 128 match the [ST]-Q motif motif; the sequence is SQ.

It belongs to the histone H2A family. The nucleosome is a histone octamer containing two molecules each of H2A, H2B, H3 and H4 assembled in one H3-H4 heterotetramer and two H2A-H2B heterodimers. The octamer wraps approximately 147 bp of DNA. In terms of processing, phosphorylated to form H2AS128ph (gamma-H2A) in response to DNA double-strand breaks (DSBs) generated by exogenous genotoxic agents and by stalled replication forks. Phosphorylation is dependent on the DNA damage checkpoint kinases MEC1/ATR and TEL1/ATM, spreads on either side of a detected DSB site and may mark the surrounding chromatin for recruitment of proteins required for DNA damage signaling and repair. Gamma-H2A is removed from the DNA prior to the strand invasion-primer extension step of the repair process and subsequently dephosphorylated. Dephosphorylation is necessary for efficient recovery from the DNA damage checkpoint. Post-translationally, acetylated by ESA1 to form H2AK4ac and H2AK7ac.

Its subcellular location is the nucleus. The protein resides in the chromosome. Its function is as follows. Core component of nucleosome which plays a central role in DNA double strand break (DSB) repair. Nucleosomes wrap and compact DNA into chromatin, limiting DNA accessibility to the cellular machineries which require DNA as a template. Histones thereby play a central role in transcription regulation, DNA repair, DNA replication and chromosomal stability. DNA accessibility is regulated via a complex set of post-translational modifications of histones, also called histone code, and nucleosome remodeling. The polypeptide is Histone H2A.1 (HTA1) (Lodderomyces elongisporus (strain ATCC 11503 / CBS 2605 / JCM 1781 / NBRC 1676 / NRRL YB-4239) (Yeast)).